The chain runs to 152 residues: Protein NrdI (152 aa).

Belongs to the NrdI family.

Probably involved in ribonucleotide reductase function. The chain is Protein NrdI from Mycolicibacterium vanbaalenii (strain DSM 7251 / JCM 13017 / BCRC 16820 / KCTC 9966 / NRRL B-24157 / PYR-1) (Mycobacterium vanbaalenii).